Consider the following 400-residue polypeptide: Homoserine O-acetyltransferase (400 aa).

Residues 1 to 22 (MMNVHPVKGPVATGGERPHEAD) are disordered. The region spanning 64-374 (NAILVCHALT…DKGHDAFLLD (311 aa)) is the AB hydrolase-1 domain. Serine 169 serves as the catalytic Nucleophile. Residue arginine 239 coordinates substrate. Residues aspartate 335 and histidine 368 contribute to the active site. Aspartate 369 is a substrate binding site.

Belongs to the AB hydrolase superfamily. MetX family. As to quaternary structure, homodimer.

The protein localises to the cytoplasm. It catalyses the reaction L-homoserine + acetyl-CoA = O-acetyl-L-homoserine + CoA. It functions in the pathway amino-acid biosynthesis; L-methionine biosynthesis via de novo pathway; O-acetyl-L-homoserine from L-homoserine: step 1/1. Transfers an acetyl group from acetyl-CoA to L-homoserine, forming acetyl-L-homoserine. In Rhodopseudomonas palustris (strain HaA2), this protein is Homoserine O-acetyltransferase.